We begin with the raw amino-acid sequence, 505 residues long: ATP synthase subunit alpha (505 aa).

Gly171 to Thr178 serves as a coordination point for ATP.

The protein belongs to the ATPase alpha/beta chains family. F-type ATPases have 2 components, CF(1) - the catalytic core - and CF(0) - the membrane proton channel. CF(1) has five subunits: alpha(3), beta(3), gamma(1), delta(1), epsilon(1). CF(0) has three main subunits: a(1), b(2) and c(9-12). The alpha and beta chains form an alternating ring which encloses part of the gamma chain. CF(1) is attached to CF(0) by a central stalk formed by the gamma and epsilon chains, while a peripheral stalk is formed by the delta and b chains.

Its subcellular location is the cell inner membrane. The enzyme catalyses ATP + H2O + 4 H(+)(in) = ADP + phosphate + 5 H(+)(out). Functionally, produces ATP from ADP in the presence of a proton gradient across the membrane. The alpha chain is a regulatory subunit. This is ATP synthase subunit alpha from Campylobacter fetus subsp. fetus (strain 82-40).